A 532-amino-acid polypeptide reads, in one-letter code: Zinc finger protein ZIC 2 (532 aa).

The segment at 100 to 255 (PHAAHVGSYS…YMRQQCIKQE (156 aa)) is necessary for interaction with MDFIC and transcriptional activation or repression. A phosphoserine mark is found at Ser191 and Ser199. Lys253 is covalently cross-linked (Glycyl lysine isopeptide (Lys-Gly) (interchain with G-Cter in SUMO2)). A C2H2-type 1; atypical zinc finger spans residues 256-291 (LICKWIDPEQLSNPKKSCNKTFSTMHELVTHVSVEH). A C2H2-type 2; atypical zinc finger spans residues 300-327 (HVCFWEECPREGKPFKAKYKLVNHIRVH). 3 C2H2-type zinc fingers span residues 333–357 (FPCP…KRTH), 363–387 (FQCE…MHVH), and 393–415 (YLCK…MKVH). 2 disordered regions span residues 406–452 (SSLR…SSSN) and 475–532 (HRGG…EWYV). Positions 417–435 (SSPQGSESSPAASSGYESS) are enriched in low complexity. Gly residues predominate over residues 476-521 (RGGGSGSGGAGGGSGGGSGSGGGGGGAGGGGGGSSGGGSGTAGGHS). Positions 523–532 (LSSNFNEWYV) are enriched in polar residues.

Belongs to the GLI C2H2-type zinc-finger protein family. In terms of assembly, interacts with RNF180. Interacts (via the C2H2-type domains 3, 4 and 5) with MDFIC (via the C2H2-type domains 3, 4 and 5); the interaction reduces its transcriptional activity. Interacts with GLI1 and GLI2. Interacts (via C2H2-type domain 3) with DHX9. Phosphorylated. Post-translationally, ubiquitinated by RNF180, leading to its degradation.

It is found in the nucleus. The protein resides in the cytoplasm. In terms of biological role, acts as a transcriptional activator or repressor. Plays important roles in the early stage of organogenesis of the CNS. Activates the transcription of the serotonin transporter SERT in uncrossed ipsilateral retinal ganglion cells (iRGCs) to refine eye-specific projections in primary visual targets. Its transcriptional activity is repressed by MDFIC. Involved in the formation of the ipsilateral retinal projection at the optic chiasm midline. Drives the expression of EPHB1 on ipsilaterally projecting growth cones. Binds to the minimal GLI-consensus sequence 5'-TGGGTGGTC-3'. Associates to the basal SERT promoter region from ventrotemporal retinal segments of retinal embryos. This Homo sapiens (Human) protein is Zinc finger protein ZIC 2 (ZIC2).